A 155-amino-acid polypeptide reads, in one-letter code: Protein archease-like (155 aa).

Positions 26, 154, and 155 each coordinate Ca(2+).

The protein belongs to the archease family.

In terms of biological role, component of the tRNA-splicing ligase complex required to facilitate the enzymatic turnover of catalytic subunit RtcB. In Caenorhabditis briggsae, this protein is Protein archease-like.